The chain runs to 173 residues: PTS system glucose-specific EIIA component (173 aa).

Positions 40 to 144 constitute a PTS EIIA type-1 domain; sequence DPTFAQKMMG…STVTPVVVTN (105 aa). Zn(2+)-binding residues include histidine 77 and histidine 92. The Tele-phosphohistidine intermediate; for EIIA activity role is filled by histidine 92. Phosphohistidine; by HPr is present on histidine 92.

Heterodimer with glycerol kinase (glpk). Zn(2+) serves as cofactor.

It is found in the cytoplasm. The phosphoenolpyruvate-dependent sugar phosphotransferase system (sugar PTS), a major carbohydrate active transport system, catalyzes the phosphorylation of incoming sugar substrates concomitantly with their translocation across the cell membrane. The enzyme II complex composed of PtsG and Crr is involved in glucose transport. The sequence is that of PTS system glucose-specific EIIA component (crr) from Halalkalibacterium halodurans (strain ATCC BAA-125 / DSM 18197 / FERM 7344 / JCM 9153 / C-125) (Bacillus halodurans).